The primary structure comprises 157 residues: 2-C-methyl-D-erythritol 2,4-cyclodiphosphate synthase (157 aa).

Residues D8 and H10 each coordinate a divalent metal cation. 4-CDP-2-C-methyl-D-erythritol 2-phosphate is bound by residues 8-10 (DVH) and 34-35 (HS). H42 contributes to the a divalent metal cation binding site. Residues 56–58 (DIG), 61–65 (FPDTD), 100–106 (AQAPKMA), 132–135 (TTTE), F139, and R142 contribute to the 4-CDP-2-C-methyl-D-erythritol 2-phosphate site.

The protein belongs to the IspF family. Homotrimer. A divalent metal cation serves as cofactor.

It carries out the reaction 4-CDP-2-C-methyl-D-erythritol 2-phosphate = 2-C-methyl-D-erythritol 2,4-cyclic diphosphate + CMP. Its pathway is isoprenoid biosynthesis; isopentenyl diphosphate biosynthesis via DXP pathway; isopentenyl diphosphate from 1-deoxy-D-xylulose 5-phosphate: step 4/6. Functionally, involved in the biosynthesis of isopentenyl diphosphate (IPP) and dimethylallyl diphosphate (DMAPP), two major building blocks of isoprenoid compounds. Catalyzes the conversion of 4-diphosphocytidyl-2-C-methyl-D-erythritol 2-phosphate (CDP-ME2P) to 2-C-methyl-D-erythritol 2,4-cyclodiphosphate (ME-CPP) with a corresponding release of cytidine 5-monophosphate (CMP). This Ectopseudomonas mendocina (strain ymp) (Pseudomonas mendocina) protein is 2-C-methyl-D-erythritol 2,4-cyclodiphosphate synthase.